Reading from the N-terminus, the 66-residue chain is Large ribosomal subunit protein bL35 (66 aa).

Basic residues predominate over residues 1–28; sequence MPKMKTHRGSAKRFKRTGSGKLKRRHGF. Positions 1–50 are disordered; the sequence is MPKMKTHRGSAKRFKRTGSGKLKRRHGFTSHMFANKSQKQKRKLRKSAMV.

This sequence belongs to the bacterial ribosomal protein bL35 family.

The chain is Large ribosomal subunit protein bL35 from Listeria monocytogenes serotype 4a (strain HCC23).